The following is a 164-amino-acid chain: ATP synthase subunit b (164 aa).

A helical transmembrane segment spans residues 4–24; it reads LGINPTLFIAQLINFLLLIFI.

This sequence belongs to the ATPase B chain family. F-type ATPases have 2 components, F(1) - the catalytic core - and F(0) - the membrane proton channel. F(1) has five subunits: alpha(3), beta(3), gamma(1), delta(1), epsilon(1). F(0) has four main subunits: a(1), b(2) and c(10-14). The alpha and beta chains form an alternating ring which encloses part of the gamma chain. F(1) is attached to F(0) by a central stalk formed by the gamma and epsilon chains, while a peripheral stalk is formed by the delta and b chains.

Its subcellular location is the cell membrane. Functionally, f(1)F(0) ATP synthase produces ATP from ADP in the presence of a proton or sodium gradient. F-type ATPases consist of two structural domains, F(1) containing the extramembraneous catalytic core and F(0) containing the membrane proton channel, linked together by a central stalk and a peripheral stalk. During catalysis, ATP synthesis in the catalytic domain of F(1) is coupled via a rotary mechanism of the central stalk subunits to proton translocation. Its function is as follows. Component of the F(0) channel, it forms part of the peripheral stalk, linking F(1) to F(0). This Chloroflexus aurantiacus (strain ATCC 29366 / DSM 635 / J-10-fl) protein is ATP synthase subunit b.